Consider the following 663-residue polypeptide: ATP-dependent RNA helicase DBP6 (663 aa).

2 disordered regions span residues Met1–Glu119 and Val153–Ser200. 2 stretches are compositionally biased toward acidic residues: residues Val39–Gly79 and Ser88–Asp101. 2 stretches are compositionally biased toward basic and acidic residues: residues Val102–Leu111 and Gly168–Val177. Residues Lys222–Val250 carry the Q motif motif. Residues Lys264–Leu448 enclose the Helicase ATP-binding domain. Ala277–Thr284 serves as a coordination point for ATP. A DEAD box motif is present at residues Asp384–Asp387. The 158-residue stretch at Ile485–Ile642 folds into the Helicase C-terminal domain.

It belongs to the DEAD box helicase family. DDX51/DBP6 subfamily. As to quaternary structure, associated with pre-ribosomal particles.

It is found in the nucleus. The protein resides in the nucleolus. It catalyses the reaction ATP + H2O = ADP + phosphate + H(+). Its function is as follows. ATP-binding RNA helicase involved in the biogenesis of 60S ribosomal subunits and is required for the normal formation of 25S and 5.8S rRNAs. In Lodderomyces elongisporus (strain ATCC 11503 / CBS 2605 / JCM 1781 / NBRC 1676 / NRRL YB-4239) (Yeast), this protein is ATP-dependent RNA helicase DBP6 (DBP6).